A 62-amino-acid polypeptide reads, in one-letter code: MKVNDRVTVKTDGGPRRPGVVLAVEEFSEGTMYLVSLEDYPLGIWFFNEAGHQDGIFVEKAE.

Belongs to the DsrB family.

The sequence is that of Protein DsrB from Shigella boydii serotype 18 (strain CDC 3083-94 / BS512).